A 595-amino-acid polypeptide reads, in one-letter code: Ketol-acid reductoisomerase, chloroplastic (595 aa).

A chloroplast-targeting transit peptide spans 1-72 (MAATAATTFS…GGGSALSAQM (72 aa)). The KARI N-terminal Rossmann domain occupies 108 to 306 (VRGGRNLFPL…ALGSPFTFAT (199 aa)). NADP(+) contacts are provided by residues 129–136 (GVIGWGSQ), 162–167 (RKGSNS), and 201–205 (SDSAQ). His-226 is a catalytic residue. 2 consecutive KARI C-terminal knotted domains span residues 307–455 (TLEQ…RPAG) and 456–592 (DLGP…RPEL). Mg(2+) is bound by residues Asp-315, Glu-319, Glu-492, and Glu-496. Residue Ser-518 participates in substrate binding.

This sequence belongs to the ketol-acid reductoisomerase family. As to quaternary structure, homodimer. It depends on Mg(2+) as a cofactor.

The protein resides in the plastid. It localises to the chloroplast. It carries out the reaction (2R)-2,3-dihydroxy-3-methylbutanoate + NADP(+) = (2S)-2-acetolactate + NADPH + H(+). The catalysed reaction is (2R,3R)-2,3-dihydroxy-3-methylpentanoate + NADP(+) = (S)-2-ethyl-2-hydroxy-3-oxobutanoate + NADPH + H(+). Its pathway is amino-acid biosynthesis; L-isoleucine biosynthesis; L-isoleucine from 2-oxobutanoate: step 2/4. The protein operates within amino-acid biosynthesis; L-valine biosynthesis; L-valine from pyruvate: step 2/4. The sequence is that of Ketol-acid reductoisomerase, chloroplastic (AHRI) from Spinacia oleracea (Spinach).